The following is a 311-amino-acid chain: Methionyl-tRNA formyltransferase (311 aa).

109 to 112 (SKLP) is a (6S)-5,6,7,8-tetrahydrofolate binding site.

Belongs to the Fmt family.

It carries out the reaction L-methionyl-tRNA(fMet) + (6R)-10-formyltetrahydrofolate = N-formyl-L-methionyl-tRNA(fMet) + (6S)-5,6,7,8-tetrahydrofolate + H(+). Its function is as follows. Attaches a formyl group to the free amino group of methionyl-tRNA(fMet). The formyl group appears to play a dual role in the initiator identity of N-formylmethionyl-tRNA by promoting its recognition by IF2 and preventing the misappropriation of this tRNA by the elongation apparatus. The sequence is that of Methionyl-tRNA formyltransferase (fmt) from Mycoplasma pneumoniae (strain ATCC 29342 / M129 / Subtype 1) (Mycoplasmoides pneumoniae).